A 453-amino-acid polypeptide reads, in one-letter code: Protein FAM117A (453 aa).

The span at 1-25 (MAGAAAGGRGGGAWGPGRGGAGGLR) shows a compositional bias: gly residues. Positions 1-45 (MAGAAAGGRGGGAWGPGRGGAGGLRRGCSPPAPAGSPRAGLQPLR) are disordered. Phosphoserine is present on residues Ser29 and Ser67. Residues 149–175 (TDHRKEISKLKQQLQRTKLSRSGKEKE) adopt a coiled-coil conformation. Residues 159–201 (KQQLQRTKLSRSGKEKERGSPLLGDHAVRGALRASPPSFPSGS) form a disordered region. Phosphoserine occurs at positions 178, 193, 201, and 213. Residues 269–278 (SSPSMSLASP) are compositionally biased toward low complexity. The disordered stretch occupies residues 269–320 (SSPSMSLASPQPCGLASHEEHRGAAEELASTPNDKASSPGHPAFLEDGSPSP). Thr299 is subject to Phosphothreonine. Phosphoserine is present on residues Ser319 and Ser327. Thr354 is modified (phosphothreonine). Residues 406–416 (GSPLPPASPRP) show a composition bias toward pro residues. The segment at 406 to 453 (GSPLPPASPRPPPRKDPEASKASPLPFEPWQRTPPSEEPVLFQSSLMV) is disordered. Phosphoserine is present on residues Ser413 and Ser428.

The protein belongs to the FAM117 family.

The polypeptide is Protein FAM117A (FAM117A) (Homo sapiens (Human)).